We begin with the raw amino-acid sequence, 89 residues long: Putative membrane protein insertion efficiency factor (89 aa).

It belongs to the UPF0161 family.

It localises to the cell inner membrane. Functionally, could be involved in insertion of integral membrane proteins into the membrane. The sequence is that of Putative membrane protein insertion efficiency factor from Petrotoga mobilis (strain DSM 10674 / SJ95).